Consider the following 3411-residue polypeptide: Genome polyprotein (3411 aa).

The Cytoplasmic segment spans residues 1 to 104 (MSGRKAQGKT…LSSRKRRSHD (104 aa)). The segment at 38-72 (PGPSRGVQGFIFFFLFNILTGKKITAHLKRLWKML) is hydrophobic; homodimerization of capsid protein C. Positions 102 to 121 (SHDVLTVQFLILGMLLMTGG) are cleaved as a propeptide — ER anchor for the capsid protein C, removed in mature form by serine protease NS3. A helical transmembrane segment spans residues 105 to 125 (VLTVQFLILGMLLMTGGVTLV). At 126–244 (RKNRWLLLNV…GERQLQKIER (119 aa)) the chain is on the extracellular side. 2 N-linked (GlcNAc...) asparagine; by host glycosylation sites follow: N134 and N150. The helical transmembrane segment at 245–265 (WFVRNPFFAVTALTIAYLVGS) threads the bilayer. Residues 266–270 (NMTQR) lie on the Cytoplasmic side of the membrane. A helical membrane pass occupies residues 271–285 (VVIALLVLAVGPAYS). The Extracellular portion of the chain corresponds to 286–730 (AHCIGITDRD…TVFGSAFQGL (445 aa)). Disulfide bonds link C288-C315, C345-C401, C345-C406, C359-C390, C377-C401, C377-C406, C467-C568, and C585-C615. Residues 383 to 396 (DRGWGNGCGLFGKG) are fusion peptide. A helical transmembrane segment spans residues 731-751 (FGGLNWITKVIIGAVLIWVGI). The Extracellular segment spans residues 752–757 (NTRNMT). The chain crosses the membrane as a helical span at residues 758 to 778 (MSMSMILVGVIMMFLSLGVGA). Topologically, residues 779-1132 (DQGCAINFAK…LVRSWVTAGE (354 aa)) are extracellular. Disulfide bonds link C782/C793, C833/C921, C957/C1002, C1058/C1107, C1069/C1091, and C1090/C1094. 2 N-linked (GlcNAc...) asparagine; by host glycosylation sites follow: N908 and N986. Residues 1133–1153 (IHAVPFGLVSMMIALEVVLRK) form a helical membrane-spanning segment. Residues 1154 to 1201 (RQGPKQMLVGGVVLLGAMLVGQVTLLDLLKLTVAVGLHFHEMNNGGDA) are Cytoplasmic-facing. A helical transmembrane segment spans residues 1202 to 1222 (MYMALIAAFSVRPGLLIGFGL). Residues 1223–1287 (RTLWSPRERL…ILPLMALLTP (65 aa)) lie on the Lumenal side of the membrane. Residues 1288-1308 (VTMAEVRLATMLFCTVVIIGV) form a helical membrane-spanning segment. Residues 1309–1355 (LYQNSKDTSMQKTIPLVALTLTSYLGLTQPFLGLCAFLATRIFGRRS) lie on the Cytoplasmic side of the membrane. Residues 1356-1376 (IPVNEALAAAGLVGVLAGLAF) form a helical membrane-spanning segment. Residues 1377–1378 (QE) are Lumenal-facing. Residues 1379–1399 (MENFLGPIAVGGILMMLVSVA) traverse the membrane as a helical segment. Topologically, residues 1400–1456 (GRVDGLELKKLGEVAWEEEAEISGSSARYDVALSEQGEFKLLSEEKVPWDQVVMTSL) are cytoplasmic. Residues 1407-1446 (LKKLGEVAWEEEAEISGSSARYDVALSEQGEFKLLSEEKV) are interacts with and activates NS3 protease. An intramembrane region (helical) is located at residues 1457 to 1477 (ALVGAAIHPFALLLVLAGWLF). Residues 1478–2157 (HVRGARRSGD…RNALSMMPEA (680 aa)) lie on the Cytoplasmic side of the membrane. In terms of domain architecture, Peptidase S7 spans 1485–1665 (SGDVLWDIPT…EVKEEGKEEL (181 aa)). Residues H1537, D1561, and S1622 each act as charge relay system; for serine protease NS3 activity in the active site. The Helicase ATP-binding domain maps to 1669–1825 (PTMLKKGKTT…HSNGEIEDVQ (157 aa)). Residues 1673-1676 (KKGK) are important for RNA-binding. 1682-1689 (FHPGAGKT) contributes to the ATP binding site. The DEAH box motif lies at 1773-1776 (DEAH). Residues 1820-1997 (EIEDVQTDIP…VRGGMVAPLY (178 aa)) form the Helicase C-terminal domain. K1877 bears the N6-acetyllysine; by host mark. Positions 1942–1961 (AAQRRGRIGRNPNRDGDSYY) are disordered. A helical transmembrane segment spans residues 2158 to 2178 (MTIVMLFILAGLLTSGMVIFF). Residues 2179-2186 (MSPKGISR) are Lumenal-facing. The segment at residues 2187–2207 (MSMAMGTMAGCGYLMFLGGVK) is an intramembrane region (helical). The Lumenal segment spans residues 2208–2209 (PT). Residues 2210-2230 (HISYIMLIFFVLMVVVIPEPG) traverse the membrane as a helical segment. Topologically, residues 2231 to 2241 (QQRSIQDNQVA) are cytoplasmic. The helical transmembrane segment at 2242 to 2262 (FLIIGILTLVSVVAANELGML) threads the bilayer. Residues 2263–2293 (EKTKEDLFGKKNSIPSSASPWSWPDLDLKPG) lie on the Lumenal side of the membrane. Positions 2294–2314 (AAWTVYVGIVTMLSPMLHHWI) form an intramembrane region, helical. Residues 2315 to 2360 (KVEYGNLSLSGIAQSASVLSFMDKGIPFMKMNISVIMLLISGWNSI) lie on the Lumenal side of the membrane. The chain crosses the membrane as a helical span at residues 2361–2380 (TVMPLLCGIGCAMLHWSLIL). Topologically, residues 2381–2421 (PGIKAQQSKLAQRRVFHGVAKNPVVDGNPTVDIEEAPEMPV) are cytoplasmic. Residues 2422–2442 (LYEKKLALYLLLALSLASVAM) form a helical membrane-spanning segment. Residues 2443–2445 (CRT) are Lumenal-facing. Residues 2446-2466 (PFSLAEGIVLASAALGPLIEG) form a helical membrane-spanning segment. The Cytoplasmic segment spans residues 2467–3411 (NTSLLWNGPM…DADLQPGELI (945 aa)). One can recognise an mRNA cap 0-1 NS5-type MT domain in the interval 2507 to 2771 (GTANGKTLGE…DVTLPIGTRS (265 aa)). Residue S2562 participates in S-adenosyl-L-methionine binding. Position 2562 is a phosphoserine (S2562). Catalysis depends on K2567, which acts as the For 2'-O-MTase activity. S-adenosyl-L-methionine-binding residues include G2592, W2593, T2610, L2611, D2637, and I2638. D2652 acts as the For 2'-O-MTase activity in catalysis. I2653 contacts S-adenosyl-L-methionine. Catalysis depends on for 2'-O-MTase activity residues K2688 and E2724. S-adenosyl-L-methionine is bound at residue Y2726. The Nuclear localization signal motif lies at 2878-2911 (RKIMKVVNRWLFRHLAREKNPRLCTKEEFIAKVR). Zn(2+) contacts are provided by E2945, H2949, C2954, and C2957. The region spanning 3035–3187 (GGFYADDTAG…RPIDDRFGLA (153 aa)) is the RdRp catalytic domain. Residues H3222, C3238, and C3357 each contribute to the Zn(2+) site.

The protein in the N-terminal section; belongs to the class I-like SAM-binding methyltransferase superfamily. mRNA cap 0-1 NS5-type methyltransferase family. Homodimer. Interacts (via N-terminus) with host EXOC1 (via C-terminus); this interaction results in EXOC1 degradation through the proteasome degradation pathway. As to quaternary structure, forms heterodimers with envelope protein E in the endoplasmic reticulum and Golgi. In terms of assembly, homodimer; in the endoplasmic reticulum and Golgi. Interacts with protein prM. Interacts with non-structural protein 1. Homodimer; Homohexamer when secreted. Interacts with envelope protein E. As to quaternary structure, interacts (via N-terminus) with serine protease NS3. In terms of assembly, forms a heterodimer with serine protease NS3. May form homooligomers. Forms a heterodimer with NS2B. Interacts with non-structural protein 2A (via N-terminus). Interacts with NS4B. Interacts with unphosphorylated RNA-directed RNA polymerase NS5; this interaction stimulates RNA-directed RNA polymerase NS5 guanylyltransferase activity. NS3 interacts with host PDCD6IP; this interaction contributes to virion release. As to quaternary structure, interacts with serine protease NS3. In terms of assembly, homodimer. Interacts with host STAT2; this interaction prevents the establishment of cellular antiviral state. Interacts with serine protease NS3. Interacts with host TRIM23; this interaction leads to NS5 ubiquitination. Post-translationally, specific enzymatic cleavages in vivo yield mature proteins. The nascent capsid protein C contains a C-terminal hydrophobic domain that act as a signal sequence for translocation of prM into the lumen of the ER. Mature capsid protein C is cleaved at a site upstream of this hydrophobic domain by NS3. prM is cleaved in post-Golgi vesicles by a host furin, releasing the mature small envelope protein M, and peptide pr. Non-structural protein 2A-alpha, a C-terminally truncated form of non-structural protein 2A, results from partial cleavage by NS3. Specific enzymatic cleavages in vivo yield mature proteins peptide 2K acts as a signal sequence and is removed from the N-terminus of NS4B by the host signal peptidase in the ER lumen. Signal cleavage at the 2K-4B site requires a prior NS3 protease-mediated cleavage at the 4A-2K site. In terms of processing, cleaved in post-Golgi vesicles by a host furin, releasing the mature small envelope protein M, and peptide pr. This cleavage is incomplete as up to 30% of viral particles still carry uncleaved prM. N-glycosylated. Post-translationally, N-glycosylated. The excreted form is glycosylated and this is required for efficient secretion of the protein from infected cells. In terms of processing, polyubiquitinated; ubiquitination is probably mediated by host TRIM23 and is prerequisite for NS5-STAT2 interaction. NS5 is not ISGylated or sumoylated. Phosphorylated on serines residues. This phosphorylation may trigger NS5 nuclear localization. Post-translationally, acetylated by host KAT5. Acetylation modulates NS3 RNA-binding and -unwinding activities and plays an important role for viral replication.

It localises to the virion. The protein resides in the host nucleus. Its subcellular location is the host cytoplasm. It is found in the host perinuclear region. The protein localises to the secreted. It localises to the virion membrane. The protein resides in the host endoplasmic reticulum membrane. It carries out the reaction Selective hydrolysis of -Xaa-Xaa-|-Yaa- bonds in which each of the Xaa can be either Arg or Lys and Yaa can be either Ser or Ala.. It catalyses the reaction RNA(n) + a ribonucleoside 5'-triphosphate = RNA(n+1) + diphosphate. The enzyme catalyses a ribonucleoside 5'-triphosphate + H2O = a ribonucleoside 5'-diphosphate + phosphate + H(+). The catalysed reaction is ATP + H2O = ADP + phosphate + H(+). It carries out the reaction a 5'-end (5'-triphosphoguanosine)-ribonucleoside in mRNA + S-adenosyl-L-methionine = a 5'-end (N(7)-methyl 5'-triphosphoguanosine)-ribonucleoside in mRNA + S-adenosyl-L-homocysteine. It catalyses the reaction a 5'-end (N(7)-methyl 5'-triphosphoguanosine)-ribonucleoside in mRNA + S-adenosyl-L-methionine = a 5'-end (N(7)-methyl 5'-triphosphoguanosine)-(2'-O-methyl-ribonucleoside) in mRNA + S-adenosyl-L-homocysteine + H(+). Its function is as follows. Plays a role in virus budding by binding to the cell membrane and gathering the viral RNA into a nucleocapsid that forms the core of a mature virus particle. During virus entry, may induce genome penetration into the host cytoplasm after hemifusion induced by the surface proteins. Can migrate to the cell nucleus where it modulates host functions. In terms of biological role, inhibits RNA silencing by interfering with host Dicer. Functionally, prevents premature fusion activity of envelope proteins in trans-Golgi by binding to envelope protein E at pH6.0. After virion release in extracellular space, gets dissociated from E dimers. Acts as a chaperone for envelope protein E during intracellular virion assembly by masking and inactivating envelope protein E fusion peptide. prM is the only viral peptide matured by host furin in the trans-Golgi network probably to avoid catastrophic activation of the viral fusion activity in acidic Golgi compartment prior to virion release. prM-E cleavage is inefficient, and many virions are only partially matured. These uncleaved prM would play a role in immune evasion. Its function is as follows. May play a role in virus budding. Exerts cytotoxic effects by activating a mitochondrial apoptotic pathway through M ectodomain. May display a viroporin activity. In terms of biological role, binds to host cell surface receptor and mediates fusion between viral and cellular membranes. Envelope protein is synthesized in the endoplasmic reticulum in the form of heterodimer with protein prM. They play a role in virion budding in the ER, and the newly formed immature particle is covered with 60 spikes composed of heterodimer between precursor prM and envelope protein E. The virion is transported to the Golgi apparatus where the low pH causes dissociation of PrM-E heterodimers and formation of E homodimers. prM-E cleavage is inefficient, and many virions are only partially matured. These uncleaved prM would play a role in immune evasion. Functionally, involved in immune evasion, pathogenesis and viral replication. Once cleaved off the polyprotein, is targeted to three destinations: the viral replication cycle, the plasma membrane and the extracellular compartment. Essential for viral replication. Required for formation of the replication complex and recruitment of other non-structural proteins to the ER-derived membrane structures. Excreted as a hexameric lipoparticle that plays a role against host immune response. Antagonizing the complement function. Binds to the host macrophages and dendritic cells. Inhibits signal transduction originating from Toll-like receptor 3 (TLR3). Component of the viral RNA replication complex that functions in virion assembly and antagonizes the host immune response. Its function is as follows. Required cofactor for the serine protease function of NS3. May have membrane-destabilizing activity and form viroporins. In terms of biological role, displays three enzymatic activities: serine protease, NTPase and RNA helicase. NS3 serine protease, in association with NS2B, performs its autocleavage and cleaves the polyprotein at dibasic sites in the cytoplasm: C-prM, NS2A-NS2B, NS2B-NS3, NS3-NS4A, NS4A-2K and NS4B-NS5. NS3 RNA helicase binds RNA and unwinds dsRNA in the 3' to 5' direction. Also plays a role in virus assembly. Functionally, regulates the ATPase activity of the NS3 helicase activity. NS4A allows NS3 helicase to conserve energy during unwinding. Functions as a signal peptide for NS4B and is required for the interferon antagonism activity of the latter. Its function is as follows. Induces the formation of ER-derived membrane vesicles where the viral replication takes place. Inhibits interferon (IFN)-induced host STAT1 phosphorylation and nuclear translocation, thereby preventing the establishment of cellular antiviral state by blocking the IFN-alpha/beta pathway. In terms of biological role, replicates the viral (+) and (-) RNA genome, and performs the capping of genomes in the cytoplasm. NS5 methylates viral RNA cap at guanine N-7 and ribose 2'-O positions. Besides its role in RNA genome replication, also prevents the establishment of cellular antiviral state by blocking the interferon-alpha/beta (IFN-alpha/beta) signaling pathway. IFN-I induces binding of NS5 to host IFN-activated transcription factor STAT2, preventing its transcriptional activity. Host TRIM23 is the E3 ligase that interacts with and polyubiquitinates NS5 to promote its binding to STAT2 and trigger IFN-I signaling inhibition. The protein is Genome polyprotein of Yellow fever virus (strain French neurotropic vaccine FNV) (YFV).